The following is a 65-amino-acid chain: Large ribosomal subunit protein bL35 (65 aa).

This sequence belongs to the bacterial ribosomal protein bL35 family.

In Syntrophobacter fumaroxidans (strain DSM 10017 / MPOB), this protein is Large ribosomal subunit protein bL35.